The chain runs to 66 residues: Large ribosomal subunit protein uL29 (66 aa).

Belongs to the universal ribosomal protein uL29 family.

The polypeptide is Large ribosomal subunit protein uL29 (Rhizobium meliloti (strain 1021) (Ensifer meliloti)).